A 362-amino-acid chain; its full sequence is Methylthioribose-1-phosphate isomerase (362 aa).

D252 functions as the Proton donor in the catalytic mechanism.

It belongs to the eIF-2B alpha/beta/delta subunits family. MtnA subfamily.

It localises to the cytoplasm. The protein localises to the nucleus. The enzyme catalyses 5-(methylsulfanyl)-alpha-D-ribose 1-phosphate = 5-(methylsulfanyl)-D-ribulose 1-phosphate. Its pathway is amino-acid biosynthesis; L-methionine biosynthesis via salvage pathway; L-methionine from S-methyl-5-thio-alpha-D-ribose 1-phosphate: step 1/6. Functionally, catalyzes the interconversion of methylthioribose-1-phosphate (MTR-1-P) into methylthioribulose-1-phosphate (MTRu-1-P). The sequence is that of Methylthioribose-1-phosphate isomerase from Drosophila virilis (Fruit fly).